A 475-amino-acid polypeptide reads, in one-letter code: Ankyrin repeat, SAM and basic leucine zipper domain-containing protein 1 (475 aa).

The interval 1–25 is disordered; sequence MAAGALRGLPVAGGGESSESEDDGW. Phosphoserine is present on residues S17, S18, and S20. ANK repeat units follow at residues 45–74, 78–107, 110–144, 148–177, 181–210, and 214–243; these read EKKE…SVDS, YGWT…NASF, DKQT…DPNV, RLMT…EVNT, NGYT…NKML, and DGKM…PLEG. The SAM domain maps to 272 to 334; sequence SYTAFGDLEV…KILAALKELQ (63 aa).

In terms of assembly, interacts with DDX4, PIWIL1, RANBP9 and TDRD1.

Its subcellular location is the cytoplasm. Its function is as follows. Plays a central role during spermatogenesis by repressing transposable elements and preventing their mobilization, which is essential for the germline integrity. Acts via the piRNA metabolic process, which mediates the repression of transposable elements during meiosis by forming complexes composed of piRNAs and Piwi proteins and governs the methylation and subsequent repression of transposons. Its association with pi-bodies suggests a participation in the primary piRNAs metabolic process. Required prior to the pachytene stage to facilitate the production of multiple types of piRNAs, including those associated with repeats involved in the regulation of retrotransposons. May act by mediating protein-protein interactions during germ cell maturation. In Papio anubis (Olive baboon), this protein is Ankyrin repeat, SAM and basic leucine zipper domain-containing protein 1 (ASZ1).